The primary structure comprises 36 residues: Photosystem I reaction center subunit VIII (36 aa).

Residues 10–29 (FVPLVGLVFPAIAMASLFLY) form a helical membrane-spanning segment.

The protein belongs to the PsaI family.

The protein resides in the plastid. It is found in the chloroplast thylakoid membrane. Functionally, may help in the organization of the PsaL subunit. This Oryza nivara (Indian wild rice) protein is Photosystem I reaction center subunit VIII.